Here is a 284-residue protein sequence, read N- to C-terminus: Peflin (284 aa).

A disordered region spans residues Met-1–Ala-111. Residues Gln-8 to Tyr-26 are compositionally biased toward low complexity. Tandem repeats lie at residues Pro-21 to Pro-29, Asn-31 to Gly-39, Pro-41 to Pro-49, Ala-50 to Pro-58, Ala-59 to Pro-67, Thr-76 to Ala-84, Ala-85 to Gln-92, Pro-93 to Ala-100, and Gln-101 to Gly-109. Positions Pro-21–Gly-109 are 9 X 9 AA approximate tandem repeat of [AP]-P-G-G-P-Y-G-G-P-P. Positions Gly-34–Ala-50 are enriched in gly residues. Residues Gly-65–Gly-75 are compositionally biased toward low complexity. Residues Thr-76–Tyr-90 are compositionally biased toward gly residues. EF-hand domains lie at Asn-114 to Ser-149, Thr-155 to Ile-183, Lys-181 to Asn-216, Leu-217 to Leu-253, and Thr-254 to Met-283. Asp-127, Asp-129, Ser-131, and Tyr-133 together coordinate Ca(2+). Lys-137 is covalently cross-linked (Glycyl lysine isopeptide (Lys-Gly) (interchain with G-Cter in ubiquitin)). Glu-138 lines the Ca(2+) pocket. Asp-194, Asp-196, Ser-198, Ser-200, and Glu-205 together coordinate Ca(2+). Residues Thr-204–Leu-284 are required for interaction with PDCD6.

As to quaternary structure, heterodimer; heterodimerizes (via the EF-hand 5) with PDCD6. Dissociates from PDCD6 in presence of calcium. Ubiquitinated by the BCR(KLHL12) E3 ubiquitin ligase complex.

Its subcellular location is the cytoplasm. The protein resides in the endoplasmic reticulum. It localises to the membrane. The protein localises to the cytoplasmic vesicle. It is found in the COPII-coated vesicle membrane. Its function is as follows. Calcium-binding protein that acts as an adapter that bridges unrelated proteins or stabilizes weak protein-protein complexes in response to calcium. Together with PDCD6, acts as a calcium-dependent adapter for the BCR(KLHL12) complex, a complex involved in endoplasmic reticulum (ER)-Golgi transport by regulating the size of COPII coats. In response to cytosolic calcium increase, the heterodimer formed with PDCD6 interacts with, and bridges together the BCR(KLHL12) complex and SEC31 (SEC31A or SEC31B), promoting monoubiquitination of SEC31 and subsequent collagen export, which is required for neural crest specification. Its role in the heterodimer formed with PDCD6 is however unclear: some evidence shows that PEF1 and PDCD6 work together and promote association between PDCD6 and SEC31 in presence of calcium. Other reports show that PEF1 dissociates from PDCD6 in presence of calcium, and may act as a negative regulator of PDCD6. Also acts as a negative regulator of ER-Golgi transport; possibly by inhibiting interaction between PDCD6 and SEC31. The sequence is that of Peflin from Homo sapiens (Human).